The primary structure comprises 577 residues: Vacuolar membrane amino acid uptake transporter fnx2 (577 aa).

A compositionally biased stretch (polar residues) spans methionine 1–glycine 14. Residues methionine 1 to threonine 80 form a disordered region. Low complexity predominate over residues serine 22–aspartate 39. Residues serine 40 to glutamate 62 show a composition bias toward basic and acidic residues. A run of 14 helical transmembrane segments spans residues valine 91–serine 111, phenylalanine 123–glycine 145, leucine 157–leucine 177, isoleucine 186–valine 206, isoleucine 217–alanine 237, isoleucine 244–leucine 264, leucine 286–valine 306, leucine 317–phenylalanine 337, leucine 356–phenylalanine 376, leucine 391–leucine 411, isoleucine 418–tyrosine 438, tyrosine 448–isoleucine 468, glycine 490–leucine 510, and leucine 547–valine 567.

It belongs to the major facilitator superfamily.

Its subcellular location is the vacuole. It localises to the membrane. MFS-type transporter involved in vacuolar amino acid uptake. The sequence is that of Vacuolar membrane amino acid uptake transporter fnx2 (fnx2) from Schizosaccharomyces pombe (strain 972 / ATCC 24843) (Fission yeast).